We begin with the raw amino-acid sequence, 449 residues long: MDTNNDIEKRILELAKQQVSPIEYENYLSQLKYNPNASKSDIAFFYAPNMVLCSTITAKYSALLKEILSQNKVGMHLAHSVDVRIEVASKVHVSDHSNINYKATKSSIKDSYTFENFVVGSCNNTVYEIAKKIAQSDTPPYNPVLFYGGTGLGKTHILNAIGNHALEKHKKVVLVTSEDFLRDFLKHLNNRSMDSFKEKYRHCDFFLLDDAQFLQGKPQLEEEFFHTFNELHANNRQIVLISDRSPKNIAGLEDRLKSRFEWGITAKIMPPDLETKLSIVKQKCQLNKIILPEEVMEYIAQHISDNIRQMEGAIIKISVNANLMNAPIDLNLAKTVLEDLQKDQAEGSSLENILLAVAQSLNLKSSEIKVSSRQKNVALARKLVVYFARLYTPNPTLSLAQFLDLKDHSSISKMYSSIKKMLEEKNPFVLSLKEEIKNRLNELNDKKQH.

The domain I, interacts with DnaA modulators stretch occupies residues 1–75 (MDTNNDIEKR…EILSQNKVGM (75 aa)). Residues 75–106 (MHLAHSVDVRIEVASKVHVSDHSNINYKATKS) are domain II. The tract at residues 107–321 (SIKDSYTFEN…GAIIKISVNA (215 aa)) is domain III, AAA+ region. The ATP site is built by Gly-151, Gly-153, Lys-154, and Thr-155. The interval 322-449 (NLMNAPIDLN…LNELNDKKQH (128 aa)) is domain IV, binds dsDNA.

The protein belongs to the DnaA family. Oligomerizes as a right-handed, spiral filament on DNA at oriC.

It localises to the cytoplasm. Plays an essential role in the initiation and regulation of chromosomal replication. ATP-DnaA binds to the origin of replication (oriC) to initiate formation of the DNA replication initiation complex once per cell cycle. Binds the DnaA box (a 9 base pair repeat at the origin) and separates the double-stranded (ds)DNA. Forms a right-handed helical filament on oriC DNA; dsDNA binds to the exterior of the filament while single-stranded (ss)DNA is stabiized in the filament's interior. The ATP-DnaA-oriC complex binds and stabilizes one strand of the AT-rich DNA unwinding element (DUE), permitting loading of DNA polymerase. After initiation quickly degrades to an ADP-DnaA complex that is not apt for DNA replication. Binds acidic phospholipids. This Helicobacter acinonychis (strain Sheeba) protein is Chromosomal replication initiator protein DnaA.